The primary structure comprises 518 residues: Delta(14)-sterol reductase erg24B (518 aa).

Asn-36 carries N-linked (GlcNAc...) asparagine glycosylation. The next 6 helical transmembrane spans lie at 110 to 130 (VTMW…FLPG), 150 to 170 (AFLS…LYGT), 182 to 202 (YVQV…FVYL), 294 to 314 (IVLT…MEPA), 321 to 341 (VIMD…VPFL), and 355 to 375 (ELGL…YVIF). Residues Lys-382, Arg-386, Leu-409, Trp-414, and 421 to 422 (NY) each bind NADP(+). The chain crosses the membrane as a helical span at residues 464-484 (SRGWGMIFTYFYMIYFGVLLL). Residues Asp-490, 494–498 (CKRKY), and Tyr-505 contribute to the NADP(+) site.

This sequence belongs to the ERG4/ERG24 family.

It localises to the endoplasmic reticulum membrane. It functions in the pathway steroid metabolism; ergosterol biosynthesis. Functionally, delta(14)-sterol reductase; part of the third module of ergosterol biosynthesis pathway that includes the late steps of the pathway. Catalyzes the reduction of the C14=C15 double bond within 4,4,24-trimethyl ergosta-8,14,24(28)-trienolto produce 4,4-dimethylfecosterol. The third module or late pathway involves the ergosterol synthesis itself through consecutive reactions that mainly occur in the endoplasmic reticulum (ER) membrane. Firstly, the squalene synthase erg9 catalyzes the condensation of 2 farnesyl pyrophosphate moieties to form squalene, which is the precursor of all steroids. Squalene synthase is crucial for balancing the incorporation of farnesyl diphosphate (FPP) into sterol and nonsterol isoprene synthesis. Secondly, squalene is converted into lanosterol by the consecutive action of the squalene epoxidase erg1 and the lanosterol synthase erg7. Then, the delta(24)-sterol C-methyltransferase erg6 methylates lanosterol at C-24 to produce eburicol. Eburicol is the substrate of the sterol 14-alpha demethylase encoded by cyp51A and cyp51B, to yield 4,4,24-trimethyl ergosta-8,14,24(28)-trienol. The C-14 reductase erg24 then reduces the C14=C15 double bond which leads to 4,4-dimethylfecosterol. A sequence of further demethylations at C-4, involving the C-4 demethylation complex containing the C-4 methylsterol oxidases erg25A or erg25B, the sterol-4-alpha-carboxylate 3-dehydrogenase erg26 and the 3-keto-steroid reductase erg27, leads to the production of fecosterol via 4-methylfecosterol. The C-8 sterol isomerase erg2 then catalyzes the reaction which results in unsaturation at C-7 in the B ring of sterols and thus converts fecosterol to episterol. The sterol-C5-desaturase erg3B then catalyzes the introduction of a C-5 double bond in the B ring to produce 5-dehydroepisterol. The 2 other sterol-C5-desaturases, erg3A and erg3C, seem to be less important in ergosterol biosynthesis. The C-22 sterol desaturase erg5 further converts 5-dehydroepisterol into ergosta-5,7,22,24(28)-tetraen-3beta-ol by forming the C-22(23) double bond in the sterol side chain. Finally, ergosta-5,7,22,24(28)-tetraen-3beta-ol is substrate of the C-24(28) sterol reductases erg4A and erg4B to produce ergosterol. Possible alternative sterol biosynthetic pathways might exist from fecosterol to ergosterol, depending on the activities of the erg3 isoforms. The sequence is that of Delta(14)-sterol reductase erg24B from Aspergillus fumigatus (strain ATCC MYA-4609 / CBS 101355 / FGSC A1100 / Af293) (Neosartorya fumigata).